Consider the following 103-residue polypeptide: NADH-quinone oxidoreductase subunit K (103 aa).

3 helical membrane passes run 4-24 (LTSY…GVIA), 28-48 (IFVI…FLIT), and 64-84 (MVIS…ILLF).

Belongs to the complex I subunit 4L family. In terms of assembly, NDH-1 is composed of 14 different subunits. Subunits NuoA, H, J, K, L, M, N constitute the membrane sector of the complex.

Its subcellular location is the cell inner membrane. The catalysed reaction is a quinone + NADH + 5 H(+)(in) = a quinol + NAD(+) + 4 H(+)(out). NDH-1 shuttles electrons from NADH, via FMN and iron-sulfur (Fe-S) centers, to quinones in the respiratory chain. The immediate electron acceptor for the enzyme in this species is believed to be ubiquinone. Couples the redox reaction to proton translocation (for every two electrons transferred, four hydrogen ions are translocated across the cytoplasmic membrane), and thus conserves the redox energy in a proton gradient. This chain is NADH-quinone oxidoreductase subunit K, found in Aliarcobacter butzleri (strain RM4018) (Arcobacter butzleri).